The primary structure comprises 654 residues: Coiled-coil domain-containing protein 30 (654 aa).

The tract at residues 38–65 (TLESRRDPNSSLQKEFPQHQDEDQSRAA) is disordered. Residues 53–62 (FPQHQDEDQS) show a composition bias toward basic and acidic residues. 2 coiled-coil regions span residues 97-244 (REER…LDNA) and 276-559 (KSQQ…QIIR). A disordered region spans residues 614 to 654 (AAAIPKSPEPLSRSQDSESGYINVTSLKETHNTQGDQKPEL). Residues 625–654 (SRSQDSESGYINVTSLKETHNTQGDQKPEL) show a composition bias toward polar residues.

Belongs to the prefoldin subunit beta family.

In Mus musculus (Mouse), this protein is Coiled-coil domain-containing protein 30 (Ccdc30).